The chain runs to 339 residues: D-glycero-alpha-D-manno-heptose 7-phosphate kinase (339 aa).

17–20 (GGTD) lines the substrate pocket. ATP-binding positions include S57 and 110-116 (GSGLGGS). Residues S116 and E148 each contribute to the Mg(2+) site. D160 serves as the catalytic Proton acceptor.

The protein belongs to the GHMP kinase family.

The catalysed reaction is D-glycero-alpha-D-manno-heptose 7-phosphate + ATP = D-glycero-alpha-D-manno-heptose 1,7-bisphosphate + ADP + H(+). Its pathway is nucleotide-sugar biosynthesis; GDP-D-glycero-alpha-D-manno-heptose biosynthesis; GDP-D-glycero-alpha-D-manno-heptose from D-glycero-alpha-D-manno-heptose 7-phosphate: step 1/3. It participates in capsule biogenesis; capsule polysaccharide biosynthesis. Its function is as follows. Catalyzes the phosphorylation of D-glycero-alpha-D-manno-heptose 7-phosphate at the C-1 position to form D-glycero-alpha-D-manno-heptose 1,7-bisphosphate. In Campylobacter jejuni subsp. jejuni serotype O:2 (strain ATCC 700819 / NCTC 11168), this protein is D-glycero-alpha-D-manno-heptose 7-phosphate kinase.